Reading from the N-terminus, the 138-residue chain is Large ribosomal subunit protein bL19 (138 aa).

The protein belongs to the bacterial ribosomal protein bL19 family.

This protein is located at the 30S-50S ribosomal subunit interface and may play a role in the structure and function of the aminoacyl-tRNA binding site. The protein is Large ribosomal subunit protein bL19 of Rickettsia peacockii (strain Rustic).